Consider the following 205-residue polypeptide: Pectinesterase inhibitor 3 (205 aa).

The N-terminal stretch at methionine 1–glycine 25 is a signal peptide. Cystine bridges form between cysteine 38–cysteine 47 and cysteine 104–cysteine 156.

This sequence belongs to the PMEI family. In terms of tissue distribution, expressed in apical meristem.

The protein localises to the secreted. It localises to the extracellular space. It is found in the apoplast. Functionally, pectin methylesterase (PME) inhibitor that can target PMEs (e.g. PME2 and PME3) in a pH-dependent manner, mainly in slightly acidic conditions (pH 6.3 and 5.0) but not at pH 7.5; this processus relies on changes in the protonation of amino acids involved in intermolecular and intramolecular interactions. Regulates de-methylesterification of pectins in the apical meristem and affects primordia formation and phyllotactic patterning. This Arabidopsis thaliana (Mouse-ear cress) protein is Pectinesterase inhibitor 3.